We begin with the raw amino-acid sequence, 298 residues long: Beta-soluble NSF attachment protein (298 aa).

This sequence belongs to the SNAP family. Interacts with PRKCABP, and disrupts the interaction between GRIA2 and PRKCABP, leading to the internalization of GRIA2. As to expression, brain.

Its subcellular location is the membrane. Its function is as follows. Required for vesicular transport between the endoplasmic reticulum and the Golgi apparatus. The sequence is that of Beta-soluble NSF attachment protein (NAPB) from Bos taurus (Bovine).